Here is a 106-residue protein sequence, read N- to C-terminus: Small ribosomal subunit protein uS10 (106 aa).

Belongs to the universal ribosomal protein uS10 family. Part of the 30S ribosomal subunit.

Involved in the binding of tRNA to the ribosomes. The protein is Small ribosomal subunit protein uS10 of Archaeoglobus fulgidus (strain ATCC 49558 / DSM 4304 / JCM 9628 / NBRC 100126 / VC-16).